The primary structure comprises 347 residues: NADH-ubiquinone oxidoreductase chain 2 (347 aa).

The next 11 membrane-spanning stretches (helical) occupy residues 3-23 (PPIF…VMTS), 25-45 (HWML…PILM), 59-79 (YFLT…INLL), 96-116 (ILMT…FWVP), 122-142 (IPLS…LSVL), 149-169 (INPN…GWGG), 178-198 (ILAY…LYNP), 201-221 (MILN…LFML), 237-257 (MPLI…LPPL), 274-294 (EMII…YFYM), and 325-345 (FLPP…MISI).

It belongs to the complex I subunit 2 family. In terms of assembly, core subunit of respiratory chain NADH dehydrogenase (Complex I) which is composed of 45 different subunits. Interacts with TMEM242.

Its subcellular location is the mitochondrion inner membrane. It catalyses the reaction a ubiquinone + NADH + 5 H(+)(in) = a ubiquinol + NAD(+) + 4 H(+)(out). Core subunit of the mitochondrial membrane respiratory chain NADH dehydrogenase (Complex I) which catalyzes electron transfer from NADH through the respiratory chain, using ubiquinone as an electron acceptor. Essential for the catalytic activity and assembly of complex I. The protein is NADH-ubiquinone oxidoreductase chain 2 of Genetta servalina (Servaline genet).